The sequence spans 78 residues: Acyl carrier protein (78 aa).

The Carrier domain maps to 4 to 78; the sequence is AEIKDKVYDI…QQAIDYIVKK (75 aa). S39 is modified (O-(pantetheine 4'-phosphoryl)serine).

It belongs to the acyl carrier protein (ACP) family. Post-translationally, 4'-phosphopantetheine is transferred from CoA to a specific serine of apo-ACP by AcpS. This modification is essential for activity because fatty acids are bound in thioester linkage to the sulfhydryl of the prosthetic group.

It is found in the cytoplasm. The protein operates within lipid metabolism; fatty acid biosynthesis. In terms of biological role, carrier of the growing fatty acid chain in fatty acid biosynthesis. This Chlorobium phaeovibrioides (strain DSM 265 / 1930) (Prosthecochloris vibrioformis (strain DSM 265)) protein is Acyl carrier protein.